Here is a 661-residue protein sequence, read N- to C-terminus: UvrABC system protein B (661 aa).

The Helicase ATP-binding domain occupies 28–414 (DGVNEGKRHQ…HTDEMVEQII (387 aa)). 41-48 (GATGTGKT) provides a ligand contact to ATP. The Beta-hairpin motif lies at 94 to 117 (YYDYYQPEAYVPSTDTFIEKDASI). A Helicase C-terminal domain is found at 432–598 (QIDDLLSEIQ…TINKKIHDVI (167 aa)). Positions 603–624 (ESDETNQQQQTELPKKMTKKER) are disordered. The UVR domain maps to 625 to 660 (QKTIENIEKEMKKAAKDLDFEKATELRDMLFELKAE).

The protein belongs to the UvrB family. Forms a heterotetramer with UvrA during the search for lesions. Interacts with UvrC in an incision complex.

The protein resides in the cytoplasm. The UvrABC repair system catalyzes the recognition and processing of DNA lesions. A damage recognition complex composed of 2 UvrA and 2 UvrB subunits scans DNA for abnormalities. Upon binding of the UvrA(2)B(2) complex to a putative damaged site, the DNA wraps around one UvrB monomer. DNA wrap is dependent on ATP binding by UvrB and probably causes local melting of the DNA helix, facilitating insertion of UvrB beta-hairpin between the DNA strands. Then UvrB probes one DNA strand for the presence of a lesion. If a lesion is found the UvrA subunits dissociate and the UvrB-DNA preincision complex is formed. This complex is subsequently bound by UvrC and the second UvrB is released. If no lesion is found, the DNA wraps around the other UvrB subunit that will check the other stand for damage. The polypeptide is UvrABC system protein B (Staphylococcus epidermidis (strain ATCC 35984 / DSM 28319 / BCRC 17069 / CCUG 31568 / BM 3577 / RP62A)).